The following is a 214-amino-acid chain: Proteasome subunit beta (214 aa).

The propeptide at 1–11 is removed in mature form; by autocatalysis; it reads MLDTSQEIMKG. The active-site Nucleophile is Thr12.

Belongs to the peptidase T1B family. In terms of assembly, the 20S proteasome core is composed of 14 alpha and 14 beta subunits that assemble into four stacked heptameric rings, resulting in a barrel-shaped structure. The two inner rings, each composed of seven catalytic beta subunits, are sandwiched by two outer rings, each composed of seven alpha subunits. The catalytic chamber with the active sites is on the inside of the barrel. Has a gated structure, the ends of the cylinder being occluded by the N-termini of the alpha-subunits. Is capped at one or both ends by the proteasome regulatory ATPase, PAN.

It is found in the cytoplasm. The catalysed reaction is Cleavage of peptide bonds with very broad specificity.. The formation of the proteasomal ATPase PAN-20S proteasome complex, via the docking of the C-termini of PAN into the intersubunit pockets in the alpha-rings, triggers opening of the gate for substrate entry. Interconversion between the open-gate and close-gate conformations leads to a dynamic regulation of the 20S proteasome proteolysis activity. Component of the proteasome core, a large protease complex with broad specificity involved in protein degradation. This chain is Proteasome subunit beta, found in Methanoculleus marisnigri (strain ATCC 35101 / DSM 1498 / JR1).